The sequence spans 228 residues: Ribosomal RNA small subunit methyltransferase G (228 aa).

Residues Gly89, Leu94, 140-141 (VE), and Arg159 each bind S-adenosyl-L-methionine.

Belongs to the methyltransferase superfamily. RNA methyltransferase RsmG family.

It localises to the cytoplasm. The enzyme catalyses guanosine(527) in 16S rRNA + S-adenosyl-L-methionine = N(7)-methylguanosine(527) in 16S rRNA + S-adenosyl-L-homocysteine. Its function is as follows. Specifically methylates the N7 position of guanine in position 527 of 16S rRNA. The protein is Ribosomal RNA small subunit methyltransferase G of Burkholderia multivorans (strain ATCC 17616 / 249).